Consider the following 545-residue polypeptide: MTHFIFVTGGVVSSLGKGISAASVAALLEARGLKVTMVKMDPYINVDPGTMSPFQHGEVFVTEDGAETDLDLGYYERFLRRAKMTKLNNFTSGRVYQDVLNKERRGDYLGGTVQVIPHITDNIKERVLRAGEGYDVAIVEIGGTVGDIESLPFMESVRQLMVELGHKRTMLMHLTLLPYIKSAAELKTKPTQHSVKELLSIGIQPDILICRTEYDVDADTKRKIALFTNVEARAVVVCKDAKTIYQIPRGFYEQNVDDLICERFGFTDLPEADLTDWDNVVEALLNPEYTVRVAMVGKYVELPDAYKSVNEALLHAGIKNRVKVQIDYVNAEELESQDVSILKTADAILVPGGFGERGTEGKMKAIQYARENSIPFLGICLGMQLAVIEYARHVAGMPEASSTEFNRSTKYPLIGLITEWLDERGELQQRSLESDLGGTMRLGAQKSELVEGTKTREVYGKAEITERHRHRYEMNNRFIEAIEQAGMKISGYSSAQHLVETVEIPEHPWFIAVQFHPEFTSSPRDGHPLFASFIDAAKTQHQKSK.

Residues 1–266 form an amidoligase domain region; that stretch reads MTHFIFVTGG…DDLICERFGF (266 aa). S13 is a CTP binding site. S13 serves as a coordination point for UTP. ATP contacts are provided by residues 14-19 and D71; that span reads SLGKGI. Residues D71 and E140 each contribute to the Mg(2+) site. Residues 147–149, 187–192, and K223 contribute to the CTP site; these read DIE and KTKPTQ. UTP-binding positions include 187-192 and K223; that span reads KTKPTQ. Position 239–241 (239–241) interacts with ATP; the sequence is KDA. The Glutamine amidotransferase type-1 domain occupies 292-543; it reads RVAMVGKYVE…IDAAKTQHQK (252 aa). An L-glutamine-binding site is contributed by G353. The Nucleophile; for glutamine hydrolysis role is filled by C380. Residues 381-384, E404, and R471 each bind L-glutamine; that span reads LGMQ. Residues H516 and E518 contribute to the active site.

It belongs to the CTP synthase family. Homotetramer.

The enzyme catalyses UTP + L-glutamine + ATP + H2O = CTP + L-glutamate + ADP + phosphate + 2 H(+). The catalysed reaction is L-glutamine + H2O = L-glutamate + NH4(+). It carries out the reaction UTP + NH4(+) + ATP = CTP + ADP + phosphate + 2 H(+). Its pathway is pyrimidine metabolism; CTP biosynthesis via de novo pathway; CTP from UDP: step 2/2. With respect to regulation, allosterically activated by GTP, when glutamine is the substrate; GTP has no effect on the reaction when ammonia is the substrate. The allosteric effector GTP functions by stabilizing the protein conformation that binds the tetrahedral intermediate(s) formed during glutamine hydrolysis. Inhibited by the product CTP, via allosteric rather than competitive inhibition. In terms of biological role, catalyzes the ATP-dependent amination of UTP to CTP with either L-glutamine or ammonia as the source of nitrogen. Regulates intracellular CTP levels through interactions with the four ribonucleotide triphosphates. The sequence is that of CTP synthase from Acinetobacter baumannii (strain ACICU).